A 477-amino-acid polypeptide reads, in one-letter code: MTVIFPNFSKSSVLIVGDVMLDRYWYGPTDKIAPEAPVPIVKVNKIIDRPGGAANVAMNIASLGARSRLLGLTGVDEAAKILKKQLNESNIKWNFISVRTCPTIIKLRVMSRNQQLIRLDFEQYFNNVDTTKLLKQVELYLPKYKVLVLSDYAKGSLNCIEEIIKLARYMNVPVIVDPKGIQFSRYKGATLLTPNISEFESIVGSCRNEKILINRAQEIIIDYNLSALLITRSERGMTLCTRYAAPLYFSTQKKKVYHVTGAGDTVVGVLSAALSSGKSLEKACFLANLAASAVIKKSGTSTSNVTEMKNIMNSHICTTLPVGILDEKTLKQTISVVRNRGEKIVMTNGVFDILHSGHVSYLTNAKKLGDRLIVAVNSDGSTRRLKGKTRPINTLEQRMFILAALTVVDWVVPFYEDTPSRLVAYLSPDFLVKGGDYHVCDIEGSQGVLNRGGTVRVLNFQTGCSSSNIINAIKRKN.

The ribokinase stretch occupies residues 1–319; sequence MTVIFPNFSK…NIMNSHICTT (319 aa). Residue 195–198 participates in ATP binding; it reads NISE. Residue Asp264 is part of the active site. The tract at residues 346 to 477 is cytidylyltransferase; it reads MTNGVFDILH…NIINAIKRKN (132 aa).

It in the N-terminal section; belongs to the carbohydrate kinase PfkB family. The protein in the C-terminal section; belongs to the cytidylyltransferase family. As to quaternary structure, homodimer.

The catalysed reaction is D-glycero-beta-D-manno-heptose 7-phosphate + ATP = D-glycero-beta-D-manno-heptose 1,7-bisphosphate + ADP + H(+). It catalyses the reaction D-glycero-beta-D-manno-heptose 1-phosphate + ATP + H(+) = ADP-D-glycero-beta-D-manno-heptose + diphosphate. Its pathway is nucleotide-sugar biosynthesis; ADP-L-glycero-beta-D-manno-heptose biosynthesis; ADP-L-glycero-beta-D-manno-heptose from D-glycero-beta-D-manno-heptose 7-phosphate: step 1/4. It participates in nucleotide-sugar biosynthesis; ADP-L-glycero-beta-D-manno-heptose biosynthesis; ADP-L-glycero-beta-D-manno-heptose from D-glycero-beta-D-manno-heptose 7-phosphate: step 3/4. Catalyzes the phosphorylation of D-glycero-D-manno-heptose 7-phosphate at the C-1 position to selectively form D-glycero-beta-D-manno-heptose-1,7-bisphosphate. In terms of biological role, catalyzes the ADP transfer from ATP to D-glycero-beta-D-manno-heptose 1-phosphate, yielding ADP-D-glycero-beta-D-manno-heptose. The polypeptide is Bifunctional protein HldE (Blochmanniella pennsylvanica (strain BPEN)).